Consider the following 1051-residue polypeptide: Lateral signaling target protein 2 homolog (1051 aa).

Disordered regions lie at residues Pro305–Leu440, Gly516–Ser552, His566–Ser703, and Ile837–Ala968. The segment covering Asn319–Thr358 has biased composition (low complexity). Residues Lys360–Asn370 show a composition bias toward basic and acidic residues. The segment covering Asn371–Leu391 has biased composition (polar residues). Composition is skewed to low complexity over residues Ser392 to Ala401 and Pro409 to Ala428. Residues Asn518–Gln528 show a composition bias toward polar residues. 2 stretches are compositionally biased toward low complexity: residues Leu533–Pro549 and Pro568–Gln582. Phosphoserine occurs at positions 569 and 570. A compositionally biased stretch (polar residues) spans Gln583–Pro596. Low complexity predominate over residues Asn597 to Asn606. 2 stretches are compositionally biased toward basic residues: residues Asn607–His637 and His650–Arg672. A compositionally biased stretch (polar residues) spans Thr692–Ser703. Low complexity predominate over residues Ala840–Ala852. A Phosphoserine modification is found at Ser861. Composition is skewed to low complexity over residues Gln879 to Ser924 and Ser937 to Pro960. Residues Asp965–Val1025 form an FYVE-type zinc finger. The Zn(2+) site is built by Cys971, Cys974, Cys987, Cys990, Cys995, Cys998, Cys1017, and Cys1020. Residues Ser1028–Ser1051 are disordered.

Belongs to the lst-2 family.

Its function is as follows. Negative regulator of epidermal growth factor receptor (EGFR) signaling. In Drosophila mojavensis (Fruit fly), this protein is Lateral signaling target protein 2 homolog.